Reading from the N-terminus, the 674-residue chain is ATP-dependent DNA helicase Hel308 (674 aa).

Residues Gln-27 and 44–51 contribute to the ATP site; that span reads VPTAAGKT. The Helicase ATP-binding domain maps to 31-197; the sequence is IEQFRKGKNI…WLNASLIKSS (167 aa). The DEAH box signature appears at 142–145; sequence DEIH. Positions 224–411 constitute a Helicase C-terminal domain; sequence DINLLVKETV…PEKVRFNTLA (188 aa).

Belongs to the helicase family. Hel308 subfamily. Monomer.

It catalyses the reaction Couples ATP hydrolysis with the unwinding of duplex DNA by translocating in the 3'-5' direction.. It carries out the reaction ATP + H2O = ADP + phosphate + H(+). In terms of biological role, DNA-dependent ATPase and 3'-5' DNA helicase that may be involved in repair of stalled replication forks. The sequence is that of ATP-dependent DNA helicase Hel308 from Thermoplasma volcanium (strain ATCC 51530 / DSM 4299 / JCM 9571 / NBRC 15438 / GSS1).